We begin with the raw amino-acid sequence, 530 residues long: Phosphoenolpyruvate carboxykinase (ATP) (530 aa).

The substrate site is built by arginine 60, tyrosine 195, and lysine 201. Residues lysine 201, histidine 221, and 237–245 (GLSGTGKTT) each bind ATP. Mn(2+) contacts are provided by lysine 201 and histidine 221. A Mn(2+)-binding site is contributed by aspartate 258. ATP-binding positions include glutamate 286, arginine 324, 443 to 444 (RI), and serine 449. Arginine 324 contacts substrate.

The protein belongs to the phosphoenolpyruvate carboxykinase (ATP) family. Mn(2+) serves as cofactor.

It is found in the cytoplasm. The enzyme catalyses oxaloacetate + ATP = phosphoenolpyruvate + ADP + CO2. The protein operates within carbohydrate biosynthesis; gluconeogenesis. In terms of biological role, involved in the gluconeogenesis. Catalyzes the conversion of oxaloacetate (OAA) to phosphoenolpyruvate (PEP) through direct phosphoryl transfer between the nucleoside triphosphate and OAA. This Pelobacter propionicus (strain DSM 2379 / NBRC 103807 / OttBd1) protein is Phosphoenolpyruvate carboxykinase (ATP).